The chain runs to 700 residues: Inhibitor of carbonic anhydrase (700 aa).

An N-terminal signal peptide occupies residues 1 to 19 (MRLLICALLCLGTLGLCLA). Transferrin-like domains are found at residues 25-347 (IRWC…NLKR) and 355-685 (VKWC…NFRQ). Disulfide bonds link Cys-28-Cys-67, Cys-38-Cys-58, Cys-137-Cys-213, Cys-172-Cys-188, Cys-175-Cys-198, Cys-185-Cys-196, Cys-246-Cys-260, Cys-358-Cys-390, Cys-368-Cys-381, Cys-415-Cys-695, Cys-438-Cys-658, Cys-470-Cys-545, Cys-494-Cys-686, Cys-504-Cys-518, Cys-515-Cys-528, and Cys-585-Cys-599. An N-linked (GlcNAc...) asparagine glycan is attached at Asn-664.

This sequence belongs to the transferrin family. In terms of assembly, monomer. Interacts (via transferrin-like domain 2) with CA2. Post-translationally, N-glycosylated. Detected in blood plasma, heart, kidney, liver, colon, lung, spleen, pancreas and testis (at protein level).

Its subcellular location is the secreted. Functionally, inhibitor for carbonic anhydrase 2 (CA2). Does not bind iron ions. The chain is Inhibitor of carbonic anhydrase from Mus musculus (Mouse).